The primary structure comprises 639 residues: Chaperone protein DnaK (639 aa).

T197 bears the Phosphothreonine; by autocatalysis mark. 2 stretches are compositionally biased toward basic and acidic residues: residues 514 to 529 and 540 to 553; these read AEEN…DLVE and GTEK…EKVD. Disordered stretches follow at residues 514-554 and 603-639; these read AEEN…KVDP and DKAE…RKRG. Over residues 612–633 the composition is skewed to acidic residues; the sequence is APEEEERGVDEDIVDADFEDLD.

It belongs to the heat shock protein 70 family.

Acts as a chaperone. This is Chaperone protein DnaK from Jannaschia sp. (strain CCS1).